Reading from the N-terminus, the 477-residue chain is PTS system glucose-specific EIICB component (477 aa).

A PTS EIIC type-1 domain is found at 1-388 (MFKNVFANLQ…FNLDTPGREN (388 aa)). 10 helical membrane passes run 15 to 35 (SLMLPVSVLPIAGILLGIGSA), 51 to 71 (TGGSVFSNMPLIFAIGVALGF), 76 to 96 (GVAALAAVVSYGILIQTLTAV), 112 to 132 (HLSDTGILGGIIAGAISAYMF), 152 to 172 (FVPIISGLSAILIGVILSLIW), 191 to 211 (PILAFALYGLVERALVPFGLH), 250 to 270 (LSGGFIFKMYGLPGAALAIWH), 280 to 300 (IGSIMISAALTAFLTGITEPI), 304 to 324 (FIIVAPVLYVIHAILAGLSFP), and 357 to 377 (FPIIGILYGLLYYILFYLFII). The 79-residue stretch at 399–477 (NEIAPYIITA…TAMDECIKNI (79 aa)) folds into the PTS EIIB type-1 domain. Cysteine 421 (phosphocysteine intermediate; for EIIB activity) is an active-site residue. Cysteine 421 carries the post-translational modification Phosphocysteine.

It localises to the cell inner membrane. The enzyme catalyses N(pros)-phospho-L-histidyl-[protein] + D-glucose(out) = D-glucose 6-phosphate(in) + L-histidyl-[protein]. The phosphoenolpyruvate-dependent sugar phosphotransferase system (sugar PTS), a major carbohydrate active transport system, catalyzes the phosphorylation of incoming sugar substrates concomitantly with their translocation across the cell membrane. The enzyme II complex composed of PtsG and Crr is involved in glucose transport. The polypeptide is PTS system glucose-specific EIICB component (ptsG) (Buchnera aphidicola subsp. Acyrthosiphon pisum (strain APS) (Acyrthosiphon pisum symbiotic bacterium)).